Here is a 1649-residue protein sequence, read N- to C-terminus: PHD and RING finger domain-containing protein 1 (1649 aa).

Residues 1–79 (MDDDSLDELV…RSGSEDSEDD (79 aa)) form a disordered region. Serine 5 bears the Phosphoserine mark. Residues 54–79 (TDGEDEGASEEEDLEDRSGSEDSEDD) are compositionally biased toward acidic residues. The RING-type; degenerate zinc finger occupies 108 to 149 (CPICLNAFRDQAVGTPENCAHYFCLDCIVEWSKNANSCPVDR). A PHD-type zinc finger spans residues 183–233 (PTFCEVCGRSDREDRLLLCDGCDAGYHMECLDPPLQEVPVDEWFCPECAAP). Residues 324–398 (VYQRPLTPRT…TRSRIARTLG (75 aa)) are disordered. Threonine 330 bears the Phosphothreonine mark. Basic residues predominate over residues 334 to 353 (PARRKRKTRRRKKVPGRKKT). Positions 354 to 366 (PSGPSAKSKSSAT) are enriched in low complexity. Residues 367 to 382 (RSKKRQHRVKKRRGKK) are compositionally biased toward basic residues. 2 positions are modified to phosphoserine: serine 445 and serine 455. Disordered regions lie at residues 534–600 (KRAA…GAPV), 644–871 (SAAS…PKAQ), 888–1240 (FGTE…KAPL), and 1281–1395 (IQLD…PLLR). Residues 568-589 (SPAQGPSGNRPQSTGLSCQGRS) show a composition bias toward polar residues. 2 stretches are compositionally biased toward basic and acidic residues: residues 685-697 (IRRDDGGGRRDAA) and 727-742 (TRAESEASSRVPREPG). Positions 786 to 796 (AHSSQLSSPGF) are enriched in polar residues. The segment covering 802 to 812 (PVDDKEQRKEN) has biased composition (basic and acidic residues). Phosphoserine is present on residues serine 814, serine 845, serine 846, serine 864, serine 867, and serine 915. 2 stretches are compositionally biased toward polar residues: residues 835–848 (PTGSDSSAPGSSPE) and 859–871 (ITRTISINSPKAQ). A Phosphothreonine modification is found at threonine 917. Serine 936, serine 973, and serine 991 each carry phosphoserine. Over residues 988-999 (RPPSRSRSTSSS) the composition is skewed to low complexity. Residues 1000 to 1011 (RSRKKAKRKRVS) show a composition bias toward basic residues. Basic and acidic residues predominate over residues 1012–1030 (REHGRTRSGTRSESRDRSS). Residues 1043–1053 (RRQRSKAKSRR) are compositionally biased toward basic residues. Residues 1054–1063 (SSSDRSSSRE) show a composition bias toward basic and acidic residues. The segment covering 1064 to 1090 (RAKRKKAKDKSREHRRGPWGHSRRTSR) has biased composition (basic residues). Residues 1091–1101 (SRSGSPGSSSY) show a composition bias toward low complexity. Basic residues predominate over residues 1106-1118 (SRKKKKRRSASRP). A phosphoserine mark is found at serine 1124 and serine 1128. Composition is skewed to basic and acidic residues over residues 1141 to 1151 (RSHERPDRKES) and 1181 to 1198 (REKWPQTRSHSPERKGAV). A phosphoserine mark is found at serine 1202 and serine 1229. Positions 1284–1297 (DDMSSPPSPESTDS) are enriched in low complexity. A compositionally biased stretch (basic and acidic residues) spans 1345 to 1356 (HLLRPDAAEKAE). Phosphoserine is present on residues serine 1359, serine 1360, and serine 1371. Threonine 1404 is modified (phosphothreonine). Disordered regions lie at residues 1407 to 1439 (LQESESSAPAEDRAPRAPLHRPQKPREGAWDME), 1455 to 1486 (FPSHVLPEPGFPDTDPSQVYSPGLPPAPAQPS), 1526 to 1556 (TPASEPASQATAASNSEEKTPAPRLAAEKTK), and 1630 to 1649 (MRRHKKPEAGEEPPTQGAEG). The span at 1531–1540 (PASQATAASN) shows a compositional bias: polar residues. A compositionally biased stretch (basic and acidic residues) spans 1541–1556 (SEEKTPAPRLAAEKTK). The stretch at 1549-1579 (RLAAEKTKKEEYMKKLHMQERAVEEVKLAIK) forms a coiled coil.

Interacts with POLR2A (via the C-terminal domain).

The protein is PHD and RING finger domain-containing protein 1 (PHRF1) of Homo sapiens (Human).